A 255-amino-acid chain; its full sequence is MSQEFLARILEQKAREVEQMKLEQIQPLRQTYRLAEFLKNHQDRLQVIAEVKKASPSLGDINLDVDIVQQAQTYEENGAVMISVLTDEVFFKGHLDYLREISSQVEIPTLNKDFIIDEKQIIRARNAGATVILLIVAALSEERLKELYDYATELGLEVLVETHNLAELEVAHRLGAEIIGVNNRNLTTFEVDLQTSVDLAPYFEEGRYYISESAIFTGQDAERLAPYFNGILVGTALMQAENVAQRIKELQIDKG.

It belongs to the TrpC family.

The enzyme catalyses 1-(2-carboxyphenylamino)-1-deoxy-D-ribulose 5-phosphate + H(+) = (1S,2R)-1-C-(indol-3-yl)glycerol 3-phosphate + CO2 + H2O. It functions in the pathway amino-acid biosynthesis; L-tryptophan biosynthesis; L-tryptophan from chorismate: step 4/5. The chain is Indole-3-glycerol phosphate synthase from Streptococcus pneumoniae serotype 19F (strain G54).